The primary structure comprises 508 residues: Photosystem II CP47 reaction center protein (508 aa).

The next 6 helical transmembrane spans lie at Ser-21 to Ser-36, Ile-101 to Trp-115, Gly-140 to Phe-156, Ile-203 to Thr-218, Val-237 to Val-252, and Cys-457 to Arg-472.

It belongs to the PsbB/PsbC family. PsbB subfamily. In terms of assembly, PSII is composed of 1 copy each of membrane proteins PsbA, PsbB, PsbC, PsbD, PsbE, PsbF, PsbH, PsbI, PsbJ, PsbK, PsbL, PsbM, PsbT, PsbX, PsbY, PsbZ, Psb30/Ycf12, at least 3 peripheral proteins of the oxygen-evolving complex and a large number of cofactors. It forms dimeric complexes. The cofactor is Binds multiple chlorophylls. PSII binds additional chlorophylls, carotenoids and specific lipids..

It is found in the plastid. The protein resides in the chloroplast thylakoid membrane. Its function is as follows. One of the components of the core complex of photosystem II (PSII). It binds chlorophyll and helps catalyze the primary light-induced photochemical processes of PSII. PSII is a light-driven water:plastoquinone oxidoreductase, using light energy to abstract electrons from H(2)O, generating O(2) and a proton gradient subsequently used for ATP formation. This is Photosystem II CP47 reaction center protein from Chlorokybus atmophyticus (Soil alga).